Consider the following 307-residue polypeptide: Ornithine carbamoyltransferase (307 aa).

Residues 54 to 57 (STRT), Gln-81, Arg-105, and 132 to 135 (HPCQ) each bind carbamoyl phosphate. L-ornithine-binding positions include Asn-163, Asp-221, and 225–226 (SM). Carbamoyl phosphate is bound by residues 261-262 (CL) and Arg-289.

Belongs to the aspartate/ornithine carbamoyltransferase superfamily. OTCase family.

The protein localises to the cytoplasm. The enzyme catalyses carbamoyl phosphate + L-ornithine = L-citrulline + phosphate + H(+). It functions in the pathway amino-acid biosynthesis; L-arginine biosynthesis; L-arginine from L-ornithine and carbamoyl phosphate: step 1/3. Functionally, reversibly catalyzes the transfer of the carbamoyl group from carbamoyl phosphate (CP) to the N(epsilon) atom of ornithine (ORN) to produce L-citrulline. The polypeptide is Ornithine carbamoyltransferase (Aromatoleum aromaticum (strain DSM 19018 / LMG 30748 / EbN1) (Azoarcus sp. (strain EbN1))).